A 254-amino-acid chain; its full sequence is Type III pantothenate kinase (254 aa).

Position 6–13 (6–13 (DVGNTNTV)) interacts with ATP. Residues Tyr100 and 107-110 (GADR) contribute to the substrate site. The Proton acceptor role is filled by Asp109. K(+) is bound at residue Asp129. Residue Thr132 participates in ATP binding. Position 184 (Thr184) interacts with substrate.

It belongs to the type III pantothenate kinase family. Homodimer. It depends on NH4(+) as a cofactor. K(+) is required as a cofactor.

The protein resides in the cytoplasm. The catalysed reaction is (R)-pantothenate + ATP = (R)-4'-phosphopantothenate + ADP + H(+). It functions in the pathway cofactor biosynthesis; coenzyme A biosynthesis; CoA from (R)-pantothenate: step 1/5. In terms of biological role, catalyzes the phosphorylation of pantothenate (Pan), the first step in CoA biosynthesis. The sequence is that of Type III pantothenate kinase from Anaeromyxobacter sp. (strain Fw109-5).